The sequence spans 189 residues: Ribosome maturation factor RimM (189 aa).

A PRC barrel domain is found at 113-189 (DGEYYWVDLL…TIVADWQPDY (77 aa)).

The protein belongs to the RimM family. In terms of assembly, binds ribosomal protein uS19.

The protein localises to the cytoplasm. An accessory protein needed during the final step in the assembly of 30S ribosomal subunit, possibly for assembly of the head region. Essential for efficient processing of 16S rRNA. May be needed both before and after RbfA during the maturation of 16S rRNA. It has affinity for free ribosomal 30S subunits but not for 70S ribosomes. In Delftia acidovorans (strain DSM 14801 / SPH-1), this protein is Ribosome maturation factor RimM.